The following is a 94-amino-acid chain: MLKLNLQFFASKKGVSSTKNGRDSESKRLGAKRADGQYVSGGSILYRQRGTKIYPGENVGRGGDDTLFAKIDGVVKFERKGRDKKQVSVYAVAE.

A propeptide spanning residues 1–9 (MLKLNLQFF) is cleaved from the precursor.

It belongs to the bacterial ribosomal protein bL27 family. In terms of processing, the N-terminus is cleaved by ribosomal processing cysteine protease Prp.

This is Large ribosomal subunit protein bL27 from Staphylococcus epidermidis (strain ATCC 35984 / DSM 28319 / BCRC 17069 / CCUG 31568 / BM 3577 / RP62A).